Reading from the N-terminus, the 882-residue chain is Pentatricopeptide repeat-containing protein At3g03580 (882 aa).

PPR repeat units follow at residues 3–37 (TRVSSPFISRALSSSSNLNELRRIHALVISLGLDS), 38–68 (SDFFSGKLIDKYSHFREPASSLSVFRRVSPA), 70–104 (NVYLWNSIIRAFSKNGLFPEALEFYGKLRESKVSP), 105–139 (DKYTFPSVIKACAGLFDAEMGDLVYEQILDMGFES), 140–170 (DLFVGNALVDMYSRMGLLTRARQVFDEMPVR), 171–205 (DLVSWNSLISGYSSHGYYEEALEIYHELKNSWIVP), 206–240 (DSFTVSSVLPAFGNLLVVKQGQGLHGFALKSGVNS), 241–271 (VVVVNNGLVAMYLKFRRPTDARRVFDEMDVR), 272–307 (DSVSYNTMICGYLKLEMVEESVRMFLENLDQFKPDL), 309–340 (TVSSVLRACGHLRDLSLAKYIYNYMLKAGFVL), 341–371 (ESTVRNILIDVYAKCGDMITARDVFNSMECK), 372–406 (DTVSWNSIISGYIQSGDLMEAMKLFKMMMIMEEQA), 407–441 (DHITYLMLISVSTRLADLKFGKGLHSNGIKSGICI), 442–472 (DLSVSNALIDMYAKCGEVGDSLKIFSSMGTG), 473–507 (DTVTWNTVISACVRFGDFATGLQVTTQMRKSEVVP), 508–542 (DMATFLVTLPMCASLAAKRLGKEIHCCLLRFGYES), 543–573 (ELQIGNALIEMYSKCGCLENSSRVFERMSRR), 574–608 (DVVTWTGMIYAYGMYGEGEKALETFADMEKSGIVP), 609–639 (DSVVFIAIIYACSHSGLVDEGLACFEKMKTH), and 645–675 (MIEHYACVVDLLSRSQKISKAEEFIQAMPIK). The segment at 680 to 755 (IWASVLRACR…NPGYSWIEVG (76 aa)) is type E motif. Residues 756-786 (KNVHVFSSGDDSAPQSEAIYKSLEILYSLMA) are type E(+) motif. Residues 787 to 882 (KEGYIPDPRE…DGTCSCKDRW (96 aa)) form a type DYW motif region.

Belongs to the PPR family. PCMP-H subfamily.

The protein is Pentatricopeptide repeat-containing protein At3g03580 (PCMP-H23) of Arabidopsis thaliana (Mouse-ear cress).